The following is a 646-amino-acid chain: Macrolide export ATP-binding/permease protein MacB (646 aa).

The region spanning 7 to 245 is the ABC transporter domain; that stretch reads IRLEDICKTF…EATLQPHEEI (239 aa). 43–50 serves as a coordination point for ATP; it reads GASGSGKS. 4 helical membrane-spanning segments follow: residues 274 to 294, 528 to 548, 572 to 592, and 609 to 629; these read VLTLLGIIIGVSSVVTMLAIG, VAAISLLVGGIGVMNIMLVSV, FIIEALSVSAIGGAIGVILGL, and FGPVLLAFACAFATGLIFGFL.

It belongs to the ABC transporter superfamily. Macrolide exporter (TC 3.A.1.122) family. Homodimer.

It is found in the cell inner membrane. Non-canonical ABC transporter that contains transmembrane domains (TMD), which form a pore in the inner membrane, and an ATP-binding domain (NBD), which is responsible for energy generation. Confers resistance against macrolides. This Brucella abortus (strain 2308) protein is Macrolide export ATP-binding/permease protein MacB.